The following is a 565-amino-acid chain: MSQLRWWVVSQVLLLIAICSLDHSEGARVCPKIVPGLDKLRVGVDITKLDLLPLFDLGDNGFRSAVADYTCDRGQTAVVDGESFDVPDQVDSVVIESSGQQTSSVTTIKSESQISQALSISAGISVETAKAGFSSSASYAEMQEAITKYGRTVSQMSAVYTTCSANLSPNLLLGQNPLQTLSRLPSDFTADTQGYYDFIKTYGTHYFNKGKLGGMFLFTSETDMSYFQNKNSQQIEATVKATFASILSTETGGSSDESKEVIEFKESSLITSKFFGGQTNLAADGLTKWQPTIAKLPYFMSGTLSTISSLIADTTKRASMELAVKNYLLKAKVANLDRLTYIRLNSWSVGHNELRDLSAQLQNLKTKTIFSDADEKLLQSIEDQVSVPAWFSDRTTFCFRSTAVGSADQCNGQSTNTLCAEPNRYTQQYMDKTYLGDTGCRLVWKISTTESTDWFKSVKVNFRWYPTWSPCACGPVGTPFTISAPANSWTQDYLDVTNPKFGECMLQWMIEVPPTATLWAKNLEFCIDFTCGKKKQCVDANQWTEPYLDISAHEACGMSWALIAK.

A signal peptide spans 1–26 (MSQLRWWVVSQVLLLIAICSLDHSEG). Residues 27-340 (ARVCPKIVPG…AKVANLDRLT (314 aa)) form the MACPF domain. The tract at residues 387-565 (VPAWFSDRTT…CGMSWALIAK (179 aa)) is invertebrate MACPF Accessory Domain (IMAD).

As to quaternary structure, perivitellin-2 is a dimer of heterodimers held together head-to-tail by non-covalent forces. The heterodimer is composed of the tachylectin subunit (31 kDa) and the MACPF subunit (67 kDa) that are disulfide-linked. Post-translationally, PV2 is a very high density lipoprotein (VHDL). It contains 3.75% of lipids. The major lipid classes are free sterols and phospholipids and also have significant quantities of energy-providing triacylglycerides and free fatty acids. Produced by albumen secretory cells. Found in developing eggs.

The protein localises to the secreted. It localises to the target cell membrane. In terms of biological role, the egg defensive protein perivitellin-2 is a pore-forming two-subunit glycoprotein that affects both the nervous and digestive systems of mammals. In addition, it is a source of both structural and energetic molecules during embryonic development. The tachylectin subunit (31 kDa) binds target membranes while the MACPF subunit (67 kDa) disrupts lipid bilayers forming large pores (inner diameter of about 5.6 nm) altering the plasma membrance conductance. Both in vivo and in vitro, the protein shows wide pH range stability and is resistant to enzymatic proteolysis from gastrointestinal environments. It is cytotoxic to both epithelial and immune cells from the digestive system of mammals. It induces enterocyte death by a lytic mechanism and disrupts enterocyte monolayers in a dose-dependent manner. After oral administration to mice, it binds enterocytes and induces large dose-dependent morphological changes on their small intestine mucosa, reducing the absorptive surface. Additionally, it is detected in the Peyer's patches where it activates lymphoid follicles and triggers apoptosis. The toxin can also traverse the intestinal barrier and induce oral adaptive immunity with evidence of circulating antibody response. The toxin also shows hemagglutination properties thanks to the tachylectin subunit, but has no hemolytic activity. In addition to enterotoxin activity, the toxin also acts as a neurotoxin, since an intraperitoneal injection can induce paralysis of the mice rear limbs, followed by death. In Pomacea maculata (Giant applesnail), this protein is Perivitellin-2 67 kDa subunit.